The chain runs to 323 residues: Probable pectate lyase A (323 aa).

The signal sequence occupies residues 1-20 (MTNFKWIVAAAGLLSGQVLA). N95 carries N-linked (GlcNAc...) asparagine glycosylation. D136, D165, and D169 together coordinate Ca(2+). Residue R222 is part of the active site.

It belongs to the polysaccharide lyase 1 family. Ca(2+) is required as a cofactor.

The protein localises to the secreted. The catalysed reaction is Eliminative cleavage of (1-&gt;4)-alpha-D-galacturonan to give oligosaccharides with 4-deoxy-alpha-D-galact-4-enuronosyl groups at their non-reducing ends.. Its function is as follows. Pectinolytic enzyme consist of four classes of enzymes: pectin lyase, polygalacturonase, pectin methylesterase and rhamnogalacturonase. Among pectinolytic enzymes, pectin lyase is the most important in depolymerization of pectin, since it cleaves internal glycosidic bonds of highly methylated pectins. Favors pectate, the anion, over pectin, the methyl ester. This chain is Probable pectate lyase A (plyA), found in Aspergillus niger (strain ATCC MYA-4892 / CBS 513.88 / FGSC A1513).